Consider the following 662-residue polypeptide: Replication protein E1 (662 aa).

Positions Val-28–Ser-38 are enriched in basic and acidic residues. The segment at Val-28–Pro-60 is disordered. Residues Asp-39 to Phe-55 show a composition bias toward acidic residues. The short motif at Lys-88–Lys-90 is the Nuclear localization signal element. Phosphoserine; by host occurs at positions 94, 98, and 111. The Nuclear export signal motif lies at Leu-110–Leu-119. The tract at residues Thr-160 to Gly-197 is disordered. A DNA-binding region region spans residues Gln-199 to Glu-365. One can recognise an SF3 helicase domain in the interval Val-464 to Leu-614. ATP is bound at residue Gly-490–Ser-497. Residue Lys-571 forms a Glycyl lysine isopeptide (Lys-Gly) (interchain with G-Cter in SUMO) linkage. The tract at residues Asp-637–Leu-662 is disordered.

Belongs to the papillomaviridae E1 protein family. In terms of assembly, can form hexamers. Interacts with E2 protein; this interaction increases E1 DNA binding specificity. Interacts with host DNA polymerase subunit POLA2. Interacts with host single stranded DNA-binding protein RPA1. Interacts with host TOP1; this interaction stimulates the enzymatic activity of TOP1. Post-translationally, phosphorylated. In terms of processing, sumoylated.

The protein resides in the host nucleus. The enzyme catalyses Couples ATP hydrolysis with the unwinding of duplex DNA by translocating in the 3'-5' direction.. It catalyses the reaction ATP + H2O = ADP + phosphate + H(+). In terms of biological role, ATP-dependent DNA 3'-5' helicase required for initiation of viral DNA replication. It forms a complex with the viral E2 protein. The E1-E2 complex binds to the replication origin which contains binding sites for both proteins. During the initial step, a dimer of E1 interacts with a dimer of protein E2 leading to a complex that binds the viral origin of replication with high specificity. Then, a second dimer of E1 displaces the E2 dimer in an ATP-dependent manner to form the E1 tetramer. Following this, two E1 monomers are added to each half of the site, which results in the formation of two E1 trimers on the viral ori. Subsequently, two hexamers will be created. The double hexamer acts as a bi-directional helicase machinery and unwinds the viral DNA and then recruits the host DNA polymerase to start replication. The chain is Replication protein E1 from Homo sapiens (Human).